Reading from the N-terminus, the 187-residue chain is Signal peptidase complex catalytic subunit SEC11 (187 aa).

Topologically, residues 1 to 18 (MLSSLSPYMANPRNTLSQ) are cytoplasmic. A helical; Signal-anchor for type II membrane protein membrane pass occupies residues 19-39 (VLNFGLVLSSAFMVWKALSVI). Topologically, residues 40-187 (TNSASPVVVV…MGLMVMLQRE (148 aa)) are lumenal. Catalysis depends on charge relay system residues Ser53 and His92. Residue Asn125 is glycosylated (N-linked (GlcNAc...) asparagine). Asp129 serves as the catalytic Charge relay system. The interval 173–184 (VLLGFMGLMVML) is C-terminal short (CTS) helix.

It belongs to the peptidase S26B family. In terms of assembly, component of the signal peptidase complex (SPC) composed of a catalytic subunit SEC11 and three accessory subunits SPC1, SPC2 and SPC3. The complex induces a local thinning of the ER membrane which is used to measure the length of the signal peptide (SP) h-region of protein substrates. This ensures the selectivity of the complex towards h-regions shorter than 18-20 amino acids. SPC associates with the translocon complex.

Its subcellular location is the endoplasmic reticulum membrane. The enzyme catalyses Cleavage of hydrophobic, N-terminal signal or leader sequences from secreted and periplasmic proteins.. Its function is as follows. Catalytic component of the signal peptidase complex (SPC) which catalyzes the cleavage of N-terminal signal sequences from nascent proteins as they are translocated into the lumen of the endoplasmic reticulum. Specifically cleaves N-terminal signal peptides that contain a hydrophobic alpha-helix (h-region) shorter than 18-20 amino acids. In Ajellomyces capsulatus (strain G186AR / H82 / ATCC MYA-2454 / RMSCC 2432) (Darling's disease fungus), this protein is Signal peptidase complex catalytic subunit SEC11 (SEC11).